A 690-amino-acid polypeptide reads, in one-letter code: Elongation factor G (690 aa).

A tr-type G domain is found at 8–283 (EDYRNFGIMA…AVVDYLPSPV (276 aa)). GTP contacts are provided by residues 17–24 (AHIDAGKT), 81–85 (DTPGH), and 135–138 (NKMD).

It belongs to the TRAFAC class translation factor GTPase superfamily. Classic translation factor GTPase family. EF-G/EF-2 subfamily.

The protein resides in the cytoplasm. Its function is as follows. Catalyzes the GTP-dependent ribosomal translocation step during translation elongation. During this step, the ribosome changes from the pre-translocational (PRE) to the post-translocational (POST) state as the newly formed A-site-bound peptidyl-tRNA and P-site-bound deacylated tRNA move to the P and E sites, respectively. Catalyzes the coordinated movement of the two tRNA molecules, the mRNA and conformational changes in the ribosome. The protein is Elongation factor G of Rhodopseudomonas palustris (strain HaA2).